A 118-amino-acid polypeptide reads, in one-letter code: Non-specific lipid-transfer protein (118 aa).

The N-terminal stretch at M1–G27 is a signal peptide. 4 disulfides stabilise this stretch: C30-C75, C40-C54, C55-C100, and C77-C114.

This sequence belongs to the plant LTP family. Disulfide bonds.

Plant non-specific lipid-transfer proteins transfer phospholipids as well as galactolipids across membranes. May play a role in wax or cutin deposition in the cell walls of expanding epidermal cells and certain secretory tissues. The polypeptide is Non-specific lipid-transfer protein (Apium graveolens (Celery)).